The sequence spans 241 residues: Alkylated DNA repair protein ALKBH6 homolog (241 aa).

The 146-residue stretch at 87 to 232 folds into the Fe2OG dioxygenase domain; sequence AINHVLINEY…RVSLTCRLVP (146 aa). 3 residues coordinate Fe cation: H105, D107, and H181. R223 and R229 together coordinate 2-oxoglutarate.

Belongs to the alkB family. Fe(2+) serves as cofactor.

It localises to the nucleus. Functionally, probable RNA demethylase that binds to both N6-methyladenosine-containing- (m(6)A) and C5-methylcytidine-containing- (m(5)C) RNAs, thus being a probable m(6)A and m(5)C eraser. Involved in responses to abscisic acid (ABA) via the modulation of the expression of ABA signaling-related genes (e.g. ABI3 and ABI4). Acts as a negative regulator during seed germination under abiotic stresses (e.g. salt, cold and ABA). Positive modulator of seedling growth and survival in response to drought and heat, but counteracts tolerance to salt. The chain is Alkylated DNA repair protein ALKBH6 homolog from Arabidopsis thaliana (Mouse-ear cress).